A 645-amino-acid polypeptide reads, in one-letter code: Zinc finger protein 64 (645 aa).

3 C2H2-type zinc fingers span residues 175 to 197 (HKCEVCGKCFSRKDKLKTHMRCH), 203 to 225 (YKCKTCDYAAADSSSLNKHLRIH), and 231 to 253 (FKCQICPYASRNSSQLTVHLRSH). E286 is covalently cross-linked (Glycyl lysine isopeptide (Lys-Gly) (interchain with G-Cter in SUMO2)). A C2H2-type 4; atypical zinc finger spans residues 299-324 (FNCCYPGCHFKTVHGMKDLDRHLRIH). 9 C2H2-type zinc fingers span residues 330-352 (HKCEFCDKCFSRKDNLTMHMRCH), 358-380 (HKCHLCDYAAVDSSSLKKHLRIH), 386-408 (YKCQLCPYASRNSSQLTVHLRSH), 414-436 (FQCWLCSAKFKISSDLKRHMIVH), 442-465 (FKCEFCDVRCTMKANLKSHIRIKH), 467-489 (FKCLHCAFQGRDRADLLEHSRLH), 495-517 (EKCPECSYSCSSAAALRVHSRVH), 523-546 (FKCDFCSFDTKRPSSLAKHVDKVH), and 580-602 (FRCETCGASFVRDDSLRCHKKQH). N397 participates in a covalent cross-link: Glycyl lysine isopeptide (Lys-Gly) (interchain with G-Cter in SUMO2). Composition is skewed to basic and acidic residues over residues 543-554 (DKVHRDEAKTEN) and 600-610 (KQHSDQSENKN). Disordered stretches follow at residues 543 to 567 (DKVHRDEAKTENRAPLGKEGLREGS) and 600 to 645 (KQHS…SQDL). At V545 the chain carries Phosphoserine. The span at 622-631 (ASGQLSTLVS) shows a compositional bias: polar residues.

The protein belongs to the krueppel C2H2-type zinc-finger protein family. Interacts with ZNF70; this interaction promote the transactivation of the HES1 gene. Interacts with NOTCH1.

The protein resides in the nucleus. Functionally, may be involved in the regulation of mesenchymal cell differentiation through transactivation of NOTCH1 target genes. The polypeptide is Zinc finger protein 64 (Homo sapiens (Human)).